A 582-amino-acid chain; its full sequence is Formate--tetrahydrofolate ligase (582 aa).

Position 65–72 (65–72 (TPLGEGKT)) interacts with ATP.

This sequence belongs to the formate--tetrahydrofolate ligase family.

The catalysed reaction is (6S)-5,6,7,8-tetrahydrofolate + formate + ATP = (6R)-10-formyltetrahydrofolate + ADP + phosphate. It participates in one-carbon metabolism; tetrahydrofolate interconversion. The polypeptide is Formate--tetrahydrofolate ligase (Aliivibrio fischeri (strain ATCC 700601 / ES114) (Vibrio fischeri)).